The following is an 83-amino-acid chain: Transmembrane protein EP84R (83 aa).

Helical transmembrane passes span Ile-31 to Leu-51 and Ala-59 to Tyr-79.

Belongs to the asfivirus EP84R family.

It is found in the virion membrane. The sequence is that of Transmembrane protein EP84R from Ornithodoros (relapsing fever ticks).